We begin with the raw amino-acid sequence, 78 residues long: U7-lycotoxin-Ls1f (78 aa).

The N-terminal stretch at 1–22 (MKLIIFTGLALLLIVSLIDVEA) is a signal peptide. Positions 23–26 (QNEG) are excised as a propeptide.

Belongs to the neurotoxin 19 (CSTX) family. 07 (U7-Lctx) subfamily. Post-translationally, contains 4 disulfide bonds. Expressed by the venom gland.

It localises to the secreted. The protein is U7-lycotoxin-Ls1f of Lycosa singoriensis (Wolf spider).